The sequence spans 464 residues: Sugar transporter ERD6-like 1 (464 aa).

Helical transmembrane passes span 23–43 (ITCG…VYGC), 72–92 (VMTL…AVIG), 95–115 (QTMW…AFAH), 125–145 (GFLG…IAEI), 156–176 (FSNQ…GNFF), 180–200 (TLAL…FFIP), 263–283 (LIIG…AISA), 298–318 (IGTS…MFAV), 326–346 (LLMS…LSYY), 359–379 (PILI…LGGL), 399–419 (LVTV…NFMM), and 424–444 (FGTY…VWTL).

It belongs to the major facilitator superfamily. Sugar transporter (TC 2.A.1.1) family.

The protein resides in the membrane. Sugar transporter. The protein is Sugar transporter ERD6-like 1 (SUGTL4) of Arabidopsis thaliana (Mouse-ear cress).